A 165-amino-acid polypeptide reads, in one-letter code: Phosphopantetheine adenylyltransferase (165 aa).

Ser8 is a binding site for substrate. Residues 8-9 (SF) and His16 contribute to the ATP site. Substrate-binding residues include Lys40, Thr72, and Arg86. ATP contacts are provided by residues 87 to 89 (GLR), Glu97, and 122 to 128 (YSFLSSS).

Belongs to the bacterial CoaD family. Homohexamer. Requires Mg(2+) as cofactor.

It localises to the cytoplasm. It catalyses the reaction (R)-4'-phosphopantetheine + ATP + H(+) = 3'-dephospho-CoA + diphosphate. It participates in cofactor biosynthesis; coenzyme A biosynthesis; CoA from (R)-pantothenate: step 4/5. Its function is as follows. Reversibly transfers an adenylyl group from ATP to 4'-phosphopantetheine, yielding dephospho-CoA (dPCoA) and pyrophosphate. This chain is Phosphopantetheine adenylyltransferase, found in Synechococcus sp. (strain WH7803).